A 461-amino-acid chain; its full sequence is MASGPIAGGGVSKTKHKWSDSGNKSQKRSKPTVANSNSLGLEDNHQMMKISLSSISKLEVRNLKRKLQAELEEVRSLIKRLEPQGNNFAPVPNKKLKTANGGKKGGVHGAAADKGTVQILKSCNNLLTKLMKHKSGWIFNTPVDVVTLGLHDYHNIIKEPMDLGTVKTRLSKSLYKSPLEFAEDVRLTFNNAMLYNPVGHDVYHMAEILLNLFEEKWVPLETQYELLIRKQQPVRDIDFHAPVSTNTHNVEALPLPAPTPSLSPPPPPKVVENRTLERAESMTNPVKPAVLPVVPEKLVEEASANRDLTFDEKRQLSEDLQDLPYDKLEAVVQIIKKRTPELSQQDDEIELDIDSLDLETLWELFRFVTEYKESLSKKKEEQGLDSERDAESFHNSVHESNTLVTGLESSKVTELGHVASTVRQEVNVGGSSSSNSSSSGSGSGSSGSDSDSSGHESDTGN.

Gly residues predominate over residues 1–11 (MASGPIAGGGV). Residues 1 to 41 (MASGPIAGGGVSKTKHKWSDSGNKSQKRSKPTVANSNSLGL) form a disordered region. Residues 1 to 51 (MASGPIAGGGVSKTKHKWSDSGNKSQKRSKPTVANSNSLGLEDNHQMMKIS) constitute a chloroplast transit peptide. The Bromo domain maps to 114–220 (KGTVQILKSC…NLFEEKWVPL (107 aa)). Residues 298–379 (LVEEASANRD…EYKESLSKKK (82 aa)) form the NET domain. A compositionally biased stretch (basic and acidic residues) spans 376–392 (SKKKEEQGLDSERDAES). The disordered stretch occupies residues 376–461 (SKKKEEQGLD…SSGHESDTGN (86 aa)). Over residues 393 to 412 (FHNSVHESNTLVTGLESSKV) the composition is skewed to polar residues. The segment covering 429–451 (GGSSSSNSSSSGSGSGSSGSDSD) has biased composition (low complexity). Positions 452-461 (SSGHESDTGN) are enriched in basic and acidic residues.

In terms of assembly, interacts with SIZ1 (via PHD domain). Sumoylated by SIZ1. Sumoylation reduces capacity to bind to acetylated histone H3.

Its subcellular location is the plastid. It localises to the chloroplast. Probable transcription factor that binds to acetylated histone H3. This chain is Transcription factor GTE3, chloroplastic (GTE3), found in Arabidopsis thaliana (Mouse-ear cress).